Consider the following 81-residue polypeptide: Cytotoxin 2 (81 aa).

The signal sequence occupies residues 1 to 21 (MKTLLLTLVVVTIVCLDLGYT). 4 disulfide bridges follow: Cys24–Cys42, Cys35–Cys59, Cys63–Cys74, and Cys75–Cys80.

It belongs to the three-finger toxin family. Short-chain subfamily. Type IA cytotoxin sub-subfamily. In terms of assembly, monomer in solution; Homodimer and oligomer in the presence of negatively charged lipids forming a pore with a size ranging between 20 and 30 Angstroms. Expressed by the venom gland.

It is found in the secreted. Its subcellular location is the target cell membrane. Basic protein that binds to cell membrane and depolarizes cardiomyocytes. It also shows lytic activities, but 2-fold less important than that of CTX-A4. It binds to the integrin alpha-V/beta-3 (ITGAV/ITGB3) with a moderate affinity. It may interact with sulfatides in the cell membrane which induces pore formation and cell internalization and is responsible for cytotoxicity in cardiomyocytes. It may also target the mitochondrial membrane and induce mitochondrial swelling and fragmentation. The protein is Cytotoxin 2 of Naja atra (Chinese cobra).